The chain runs to 119 residues: Large ribosomal subunit protein bL20 (119 aa).

The protein belongs to the bacterial ribosomal protein bL20 family.

Binds directly to 23S ribosomal RNA and is necessary for the in vitro assembly process of the 50S ribosomal subunit. It is not involved in the protein synthesizing functions of that subunit. The polypeptide is Large ribosomal subunit protein bL20 (Methylocella silvestris (strain DSM 15510 / CIP 108128 / LMG 27833 / NCIMB 13906 / BL2)).